Here is a 443-residue protein sequence, read N- to C-terminus: Threonine/serine transporter TdcC (443 aa).

Transmembrane regions (helical) follow at residues 22-42, 44-64, 97-117, 140-160, 163-183, 207-227, 261-281, 311-331, 366-386, 389-409, and 423-443; these read TTWT…FFPI, AGFG…PIAF, GVVI…IYGV, FVAL…KDLM, VMSY…LSLI, ILIT…FSPI, MLMV…LSPA, FAIT…FKSF, ISMI…PNIL, IEAM…MYAI, and DNVF…YKLF.

Belongs to the amino acid/polyamine transporter 2 family. SdaC/TdcC subfamily.

The protein resides in the cell inner membrane. It carries out the reaction L-threonine(in) + H(+)(in) = L-threonine(out) + H(+)(out). It catalyses the reaction L-serine(in) + H(+)(in) = L-serine(out) + H(+)(out). Functionally, involved in the import of threonine and serine into the cell, with the concomitant import of a proton (symport system). The protein is Threonine/serine transporter TdcC of Shigella boydii serotype 18 (strain CDC 3083-94 / BS512).